The following is a 1503-amino-acid chain: ATP-binding cassette sub-family C member 6 (1503 aa).

The Extracellular segment spans residues 1–31 (MAAPAEPCAGQGVWNQTEPEPAATSLLSLCF). Asn-15 carries N-linked (GlcNAc...) asparagine glycosylation. A helical transmembrane segment spans residues 32–52 (LRTAGVWVPPMYLWVLGPIYL). Topologically, residues 53–72 (LFIHHHGRGYLRMSPLFKAK) are cytoplasmic. A helical transmembrane segment spans residues 73–93 (MVLGFALIVLCTSSVAVALWK). The Extracellular portion of the chain corresponds to 94–98 (IQQGT). The chain crosses the membrane as a helical span at residues 99–119 (PEAPEFLIHPTVWLTTMSFAV). Topologically, residues 120 to 131 (FLIHTERKKGVQ) are cytoplasmic. A helical membrane pass occupies residues 132–149 (SSGVLFGYWLLCFVLPAT). Residues 150–167 (NAAQQASGAGFQSDPVRH) lie on the Extracellular side of the membrane. The chain crosses the membrane as a helical span at residues 168–188 (LSTYLCLSLVVAQFVLSCLAD). Residues 189–302 (QPPFFPEDPQ…GSQWRPLLKA (114 aa)) are Cytoplasmic-facing. A helical membrane pass occupies residues 303 to 323 (IWQVFHSTFLLGTLSLIISDV). The region spanning 311 to 593 (FLLGTLSLII…LPFSIHSLVQ (283 aa)) is the ABC transmembrane type-1 1 domain. The Extracellular segment spans residues 324-349 (FRFTVPKLLSLFLEFIGDPKPPAWKG). A helical membrane pass occupies residues 350 to 370 (YLLAVLMFLSACLQTLFEQQN). Residues 371-426 (MYRLKVLQMRLRSAITGLVYRKVLALSSGSRKASAVGDVVNLVSVDVQRLTESVLY) lie on the Cytoplasmic side of the membrane. The helical transmembrane segment at 427 to 447 (LNGLWLPLVWIVVCFVYLWQL) threads the bilayer. The Extracellular segment spans residues 448–450 (LGP). The chain crosses the membrane as a helical span at residues 451 to 471 (SALTAIAVFLSLLPLNFFISK). The Cytoplasmic segment spans residues 472–533 (KRNHHQEEQM…ALRTSGLLFS (62 aa)). The helical transmembrane segment at 534 to 554 (VSLVSFQVSTFLVALVVFAVH) threads the bilayer. Topologically, residues 555–575 (TLVAENAMNAEKAFVTLTVLN) are extracellular. A helical membrane pass occupies residues 576–596 (ILNKAQAFLPFSIHSLVQARV). Residues 597-939 (SFDRLVTFLC…VKATVHLAYL (343 aa)) lie on the Cytoplasmic side of the membrane. Residues 629–853 (ITIHSATFAW…KGALMCLLDQ (225 aa)) form the ABC transporter 1 domain. 663–670 (GPVGAGKS) provides a ligand contact to ATP. Positions 854-919 (ARQPGDRGEG…LDDPDRAGWP (66 aa)) are disordered. Residues 881-901 (RRPELRRERSIKSVPEKDRTT) are compositionally biased toward basic and acidic residues. Residues 940 to 960 (RAVGTPLCLYALFLFLCQQVA) traverse the membrane as a helical segment. In terms of domain architecture, ABC transmembrane type-1 2 spans 947–1228 (CLYALFLFLC…VVRNWTDLEN (282 aa)). Residues 961-997 (SFCRGYWLSLWADDPAVGGQQTQAALRGGIFGLLGCL) lie on the Extracellular side of the membrane. A helical transmembrane segment spans residues 998 to 1018 (QAIGLFASMAAVLLGGARASR). Residues 1019–1061 (LLFQRLLWDVVRSPISFFERTPIGHLLNRFSKETDTVDVDIPD) are Cytoplasmic-facing. A helical transmembrane segment spans residues 1062–1082 (KLRSLLMYAFGLLEVSLVVAV). Ala-1083 is a topological domain (extracellular). Residues 1084 to 1104 (TPLATVAILPLFLLYAGFQSL) traverse the membrane as a helical segment. The Cytoplasmic portion of the chain corresponds to 1105 to 1175 (YVVSSCQLRR…VADRWLAANV (71 aa)). The helical transmembrane segment at 1176-1196 (ELLGNGLVFAAATCAVLSKAH) threads the bilayer. At 1197–1198 (LS) the chain is on the extracellular side. Residues 1199–1219 (AGLVGFSVSAALQVTQTLQWV) traverse the membrane as a helical segment. At 1220–1503 (VRNWTDLENS…YRLAQESGLV (284 aa)) the chain is on the cytoplasmic side. Residues 1265–1499 (IEFRDFGLRY…KGLFYRLAQE (235 aa)) enclose the ABC transporter 2 domain. Position 1286 is a phosphoserine (Ser-1286). 1299-1306 (GRTGAGKS) contributes to the ATP binding site.

It belongs to the ABC transporter superfamily. ABCC family. Conjugate transporter (TC 3.A.1.208) subfamily. It depends on Mg(2+) as a cofactor. Post-translationally, glycosylated. As to expression, expressed in kidney and liver. Very low expression in other tissues. In testis, localized to peritubular myoid cells, Leydig cells, along the basal membrane of Sertoli cells and moderately in the adluminal compartment of the seminiferous tubules.

It is found in the basal cell membrane. It localises to the basolateral cell membrane. The protein localises to the endoplasmic reticulum membrane. It catalyses the reaction an S-substituted glutathione(in) + ATP + H2O = an S-substituted glutathione(out) + ADP + phosphate + H(+). The catalysed reaction is leukotriene C4(in) + ATP + H2O = leukotriene C4(out) + ADP + phosphate + H(+). With respect to regulation, LTC4 transport is completely inhibited by 1 mM orthovanadate. Functionally, ATP-dependent transporter of the ATP-binding cassette (ABC) family that actively extrudes physiological compounds, and xenobiotics from cells. Mediates ATP-dependent transport of glutathione conjugates such as leukotriene-c4 (LTC4) and N-ethylmaleimide S-glutathione (NEM-GS) (in vitro), and an anionic cyclopentapeptide endothelin antagonist, BQ-123. May contribute to regulate the transport of organic compounds in testes across the blood-testis-barrier. Does not appear to actively transport drugs outside the cell. Confers low levels of cellular resistance to etoposide, teniposide, anthracyclines and cisplatin. Its function is as follows. Mediates the release of nucleoside triphosphates, predominantly ATP, into the circulation, where it is rapidly converted into AMP and the mineralization inhibitor inorganic pyrophosphate (PPi) by the ecto-enzyme ectonucleotide pyrophosphatase phosphodiesterase 1 (ENPP1), therefore playing a role in PPi homeostasis. Inhibits TNF-alpha-mediated apoptosis through blocking one or more caspases. The polypeptide is ATP-binding cassette sub-family C member 6 (ABCC6) (Homo sapiens (Human)).